Consider the following 214-residue polypeptide: Holliday junction branch migration complex subunit RuvA (214 aa).

The segment at 1-63 (MISSLRGTVL…EDSLTLFGFP (63 aa)) is domain I. The tract at residues 64–139 (GPDELRAFEL…KLFVTQPRTR (76 aa)) is domain II. A flexible linker region spans residues 139–143 (RSASS). The segment at 144-214 (AASTVTADVV…APAAAQAADR (71 aa)) is domain III.

It belongs to the RuvA family. Homotetramer. Forms an RuvA(8)-RuvB(12)-Holliday junction (HJ) complex. HJ DNA is sandwiched between 2 RuvA tetramers; dsDNA enters through RuvA and exits via RuvB. An RuvB hexamer assembles on each DNA strand where it exits the tetramer. Each RuvB hexamer is contacted by two RuvA subunits (via domain III) on 2 adjacent RuvB subunits; this complex drives branch migration. In the full resolvosome a probable DNA-RuvA(4)-RuvB(12)-RuvC(2) complex forms which resolves the HJ.

The protein resides in the cytoplasm. Functionally, the RuvA-RuvB-RuvC complex processes Holliday junction (HJ) DNA during genetic recombination and DNA repair, while the RuvA-RuvB complex plays an important role in the rescue of blocked DNA replication forks via replication fork reversal (RFR). RuvA specifically binds to HJ cruciform DNA, conferring on it an open structure. The RuvB hexamer acts as an ATP-dependent pump, pulling dsDNA into and through the RuvAB complex. HJ branch migration allows RuvC to scan DNA until it finds its consensus sequence, where it cleaves and resolves the cruciform DNA. The sequence is that of Holliday junction branch migration complex subunit RuvA from Clavibacter sepedonicus (Clavibacter michiganensis subsp. sepedonicus).